A 436-amino-acid polypeptide reads, in one-letter code: Glutamyl-tRNA reductase (436 aa).

Substrate contacts are provided by residues 49-52 (TCNR), serine 109, 114-116 (EGQ), and glutamine 120. Residue cysteine 50 is the Nucleophile of the active site. 198-203 (GAGRMS) lines the NADP(+) pocket.

Belongs to the glutamyl-tRNA reductase family. In terms of assembly, homodimer.

The catalysed reaction is (S)-4-amino-5-oxopentanoate + tRNA(Glu) + NADP(+) = L-glutamyl-tRNA(Glu) + NADPH + H(+). Its pathway is porphyrin-containing compound metabolism; protoporphyrin-IX biosynthesis; 5-aminolevulinate from L-glutamyl-tRNA(Glu): step 1/2. The protein operates within porphyrin-containing compound metabolism; chlorophyll biosynthesis. Functionally, catalyzes the NADPH-dependent reduction of glutamyl-tRNA(Glu) to glutamate 1-semialdehyde (GSA). The sequence is that of Glutamyl-tRNA reductase from Prochlorococcus marinus (strain MIT 9301).